The sequence spans 135 residues: Small ribosomal subunit protein bS6 (135 aa).

Lys93 is subject to N6-acetyllysine. Residues 98 to 135 (EASPMVKAKDERRERRDDFANETADDAEAGDSEEEEEE) are disordered. Over residues 104–116 (KAKDERRERRDDF) the composition is skewed to basic and acidic residues. Over residues 120–135 (TADDAEAGDSEEEEEE) the composition is skewed to acidic residues.

Belongs to the bacterial ribosomal protein bS6 family. As to quaternary structure, part of the 30S ribosomal subunit. Interacts weakly with uL2 in one of the 3.5 A resolved structures. 5 different forms of the protein, varying only in the number of C-terminal glutamate residues, were isolated. The sequence shown is form bS6-6, which is the longest. The first two Glu are encoded by the rpsF gene, the other Glu are added post-translationally by the RimK enzyme.

Binds together with bS18 to 16S ribosomal RNA. This Escherichia coli (strain K12) protein is Small ribosomal subunit protein bS6 (rpsF).